The chain runs to 1103 residues: Voltage-dependent calcium channel subunit alpha-2/delta-1 (1103 aa).

Positions 1–24 (MAAGCLLALTLTLFQSLLIGPSSE) are cleaved as a signal peptide. The Extracellular portion of the chain corresponds to 25–1073 (EPFPSAVTIK…VLEDYTDCGG (1049 aa)). N-linked (GlcNAc...) asparagine glycosylation is present at Asn92. The residue at position 119 (Ser119) is a Phosphoserine. 2 N-linked (GlcNAc...) asparagine glycosylation sites follow: Asn136 and Asn184. The 178-residue stretch at 253–430 (DMLILVDVSG…INTQEYLDVL (178 aa)) folds into the VWFA domain. Residues Asp259, Ser261, and Ser263 each contribute to the a divalent metal cation site. The MIDAS-like motif signature appears at 259–263 (DVSGS). N-linked (GlcNAc...) asparagine glycans are attached at residues Asn324, Asn348, Asn468, Asn475, Asn604, Asn613, Asn675, Asn781, Asn824, Asn888, Asn895, Asn985, and Asn998. Cys404 and Cys1059 are joined by a disulfide. The 111-residue stretch at 446 to 556 (WTNVYLDALE…NIQNPKSQEP (111 aa)) folds into the Cache domain. The chain crosses the membrane as a helical span at residues 1074–1094 (VSGLNPSLWYIIGIQFLLLWL). The Cytoplasmic segment spans residues 1095–1103 (VSGSTHRLL).

This sequence belongs to the calcium channel subunit alpha-2/delta family. In terms of assembly, dimer formed of alpha-2-1 and delta-1 chains; disulfide-linked. Voltage-dependent calcium channels are multisubunit complexes, consisting of alpha-1 (CACNA1), alpha-2 (CACNA2D), beta (CACNB) and delta (CACNA2D) subunits in a 1:1:1:1 ratio. In terms of processing, proteolytically processed into subunits alpha-2-1 and delta-1 that are disulfide-linked. In terms of tissue distribution, isoform 1 is expressed in skeletal muscle. Isoform 2 is expressed in the central nervous system. Isoform 2, isoform 4 and isoform 5 are expressed in neuroblastoma cells. Isoform 3, isoform 4 and isoform 5 are expressed in the aorta.

The protein resides in the membrane. It localises to the cell membrane. The alpha-2/delta subunit of voltage-dependent calcium channels regulates calcium current density and activation/inactivation kinetics of the calcium channel. Plays an important role in excitation-contraction coupling. The chain is Voltage-dependent calcium channel subunit alpha-2/delta-1 (CACNA2D1) from Homo sapiens (Human).